The chain runs to 573 residues: Proline--tRNA ligase (573 aa).

It belongs to the class-II aminoacyl-tRNA synthetase family. ProS type 1 subfamily. As to quaternary structure, homodimer.

It localises to the cytoplasm. It catalyses the reaction tRNA(Pro) + L-proline + ATP = L-prolyl-tRNA(Pro) + AMP + diphosphate. In terms of biological role, catalyzes the attachment of proline to tRNA(Pro) in a two-step reaction: proline is first activated by ATP to form Pro-AMP and then transferred to the acceptor end of tRNA(Pro). As ProRS can inadvertently accommodate and process non-cognate amino acids such as alanine and cysteine, to avoid such errors it has two additional distinct editing activities against alanine. One activity is designated as 'pretransfer' editing and involves the tRNA(Pro)-independent hydrolysis of activated Ala-AMP. The other activity is designated 'posttransfer' editing and involves deacylation of mischarged Ala-tRNA(Pro). The misacylated Cys-tRNA(Pro) is not edited by ProRS. In Methylobacillus flagellatus (strain ATCC 51484 / DSM 6875 / VKM B-1610 / KT), this protein is Proline--tRNA ligase.